A 142-amino-acid chain; its full sequence is Hemoglobin subunit alpha (142 aa).

The region spanning 2–142 (VLSPADKSNV…VSTVLTSKYR (141 aa)) is the Globin domain. A Phosphoserine modification is found at Ser-4. An N6-succinyllysine mark is found at Lys-8 and Lys-12. Lys-17 is modified (N6-acetyllysine; alternate). Lys-17 is subject to N6-succinyllysine; alternate. Tyr-25 carries the phosphotyrosine modification. Ser-36 is modified (phosphoserine). At Lys-41 the chain carries N6-succinyllysine. A Phosphoserine modification is found at Ser-50. Residue His-59 coordinates O2. Residue His-88 participates in heme b binding. Ser-103 is modified (phosphoserine). Thr-109 is modified (phosphothreonine). Phosphoserine is present on residues Ser-125 and Ser-132. Phosphothreonine is present on residues Thr-135 and Thr-138. Residue Ser-139 is modified to Phosphoserine.

This sequence belongs to the globin family. In terms of assembly, heterotetramer of two alpha chains and two beta chains. As to expression, red blood cells.

In terms of biological role, involved in oxygen transport from the lung to the various peripheral tissues. Its function is as follows. Hemopressin acts as an antagonist peptide of the cannabinoid receptor CNR1. Hemopressin-binding efficiently blocks cannabinoid receptor CNR1 and subsequent signaling. The polypeptide is Hemoglobin subunit alpha (HBA) (Macaca fuscata fuscata (Japanese macaque)).